We begin with the raw amino-acid sequence, 155 residues long: Large ribosomal subunit protein uL15 (155 aa).

Residues 1 to 13 are compositionally biased toward basic and acidic residues; it reads MKLNELRDAEGAT. The segment at 1–41 is disordered; that stretch reads MKLNELRDAEGATKARKRVGRGIGSGSGKTGGRGVKGQKSR. The span at 21–35 shows a compositional bias: gly residues; that stretch reads RGIGSGSGKTGGRGV.

The protein belongs to the universal ribosomal protein uL15 family. Part of the 50S ribosomal subunit.

In terms of biological role, binds to the 23S rRNA. This is Large ribosomal subunit protein uL15 from Chelativorans sp. (strain BNC1).